The chain runs to 423 residues: Serine--tRNA ligase (423 aa).

Residues 1–12 are compositionally biased toward basic and acidic residues; that stretch reads MIDLKALRENPD. Positions 1-26 are disordered; that stretch reads MIDLKALRENPDVGRASQRSRGEDPE. L-serine is bound at residue 230–232; that stretch reads TSE. ATP contacts are provided by residues 261 to 263 and V277; that span reads RRE. Residue E284 participates in L-serine binding. 348 to 351 is an ATP binding site; that stretch reads ELTS. T383 is a binding site for L-serine.

Belongs to the class-II aminoacyl-tRNA synthetase family. Type-1 seryl-tRNA synthetase subfamily. In terms of assembly, homodimer. The tRNA molecule binds across the dimer.

Its subcellular location is the cytoplasm. It carries out the reaction tRNA(Ser) + L-serine + ATP = L-seryl-tRNA(Ser) + AMP + diphosphate + H(+). It catalyses the reaction tRNA(Sec) + L-serine + ATP = L-seryl-tRNA(Sec) + AMP + diphosphate + H(+). It participates in aminoacyl-tRNA biosynthesis; selenocysteinyl-tRNA(Sec) biosynthesis; L-seryl-tRNA(Sec) from L-serine and tRNA(Sec): step 1/1. In terms of biological role, catalyzes the attachment of serine to tRNA(Ser). Is also able to aminoacylate tRNA(Sec) with serine, to form the misacylated tRNA L-seryl-tRNA(Sec), which will be further converted into selenocysteinyl-tRNA(Sec). In Beutenbergia cavernae (strain ATCC BAA-8 / DSM 12333 / CCUG 43141 / JCM 11478 / NBRC 16432 / NCIMB 13614 / HKI 0122), this protein is Serine--tRNA ligase.